The primary structure comprises 410 residues: MENNSQNVLKKIEDLKKEVRMLKEENSKTKRNLMWKIRKLEKDKLLIENERTRLDREVKSLRGEIERFRTPPLVIATVTEVLDDHRVAVKSTTGPHFVINYSRFIDRKQLEPGARVALNQQTFSIVDVLPSEKDPVVTGMEVEEKPDVSYEQIGGLEEQVREVKETVELPLKKPELFEKIGIEPPKGVLLYGPPGTGKTLLAKAVAHETNATFIKIVASEFVRKYIGEGARLVRGVFELAKEKSPSIIFIDEIDAVAAKRLKSSTSGDREVQRTLMQLLAELDGFESRGNVGIVAATNRPDILDPALLRPGRFDRFIEVPLPNEDGRREILKIHTSGMALAEEVDIELLARITDGASGADLKAICTEAGMFAIRDERDEVTMADFMDAVDKIMGVEKEEEYKQETGVMFG.

A coiled-coil region spans residues 1 to 70 (MENNSQNVLK…LRGEIERFRT (70 aa)). ATP contacts are provided by residues 195–200 (GTGKTL) and H334. Residues 408–410 (MFG) form a docks into pockets in the proteasome alpha-ring to cause gate opening region.

The protein belongs to the AAA ATPase family. Homohexamer. The hexameric complex has a two-ring architecture resembling a top hat that caps the 20S proteasome core at one or both ends. Upon ATP-binding, the C-terminus of PAN interacts with the alpha-rings of the proteasome core by binding to the intersubunit pockets.

The protein localises to the cytoplasm. In terms of biological role, ATPase which is responsible for recognizing, binding, unfolding and translocation of substrate proteins into the archaeal 20S proteasome core particle. Is essential for opening the gate of the 20S proteasome via an interaction with its C-terminus, thereby allowing substrate entry and access to the site of proteolysis. Thus, the C-termini of the proteasomal ATPase function like a 'key in a lock' to induce gate opening and therefore regulate proteolysis. Unfolding activity requires energy from ATP hydrolysis, whereas ATP binding alone promotes ATPase-20S proteasome association which triggers gate opening, and supports translocation of unfolded substrates. This Methanothermobacter thermautotrophicus (strain ATCC 29096 / DSM 1053 / JCM 10044 / NBRC 100330 / Delta H) (Methanobacterium thermoautotrophicum) protein is Proteasome-activating nucleotidase.